A 246-amino-acid polypeptide reads, in one-letter code: tRNA (guanine-N(1)-)-methyltransferase (246 aa).

S-adenosyl-L-methionine is bound by residues glycine 114 and 134-139 (IGDYIL).

Belongs to the RNA methyltransferase TrmD family. In terms of assembly, homodimer.

Its subcellular location is the cytoplasm. The catalysed reaction is guanosine(37) in tRNA + S-adenosyl-L-methionine = N(1)-methylguanosine(37) in tRNA + S-adenosyl-L-homocysteine + H(+). Functionally, specifically methylates guanosine-37 in various tRNAs. The protein is tRNA (guanine-N(1)-)-methyltransferase of Coxiella burnetii (strain CbuK_Q154) (Coxiella burnetii (strain Q154)).